A 464-amino-acid chain; its full sequence is Soluble pyridine nucleotide transhydrogenase (464 aa).

An FAD-binding site is contributed by 35 to 44 (DSRRQVGGNC).

It belongs to the class-I pyridine nucleotide-disulfide oxidoreductase family. Requires FAD as cofactor.

It is found in the cytoplasm. It carries out the reaction NAD(+) + NADPH = NADH + NADP(+). Its function is as follows. Conversion of NADPH, generated by peripheral catabolic pathways, to NADH, which can enter the respiratory chain for energy generation. The sequence is that of Soluble pyridine nucleotide transhydrogenase from Pseudomonas fluorescens (strain Pf0-1).